A 290-amino-acid chain; its full sequence is 4-hydroxybenzoate octaprenyltransferase (290 aa).

Transmembrane regions (helical) follow at residues 23-43, 46-66, 99-119, 141-161, 170-190, 213-233, 234-254, and 268-288; these read IGTLLLLWPTLWALWLAGKGV, LSILVVFVVGVFLMRAAGCVV, LFVVLVLVSFGLVLTLNAMTI, LPQFVLGAAFGWGIPMAYAAV, WLLLLANICWTVAYDTLYAMV, LIVGLLQFATLLLMLWVGYLT, QMSGAFYWSLLLAGALFIHQQ, and AFMDNNYVGLVLFIGIALSYW.

Belongs to the UbiA prenyltransferase family. It depends on Mg(2+) as a cofactor.

The protein resides in the cell inner membrane. The enzyme catalyses all-trans-octaprenyl diphosphate + 4-hydroxybenzoate = 4-hydroxy-3-(all-trans-octaprenyl)benzoate + diphosphate. It functions in the pathway cofactor biosynthesis; ubiquinone biosynthesis. Catalyzes the prenylation of para-hydroxybenzoate (PHB) with an all-trans polyprenyl group. Mediates the second step in the final reaction sequence of ubiquinone-8 (UQ-8) biosynthesis, which is the condensation of the polyisoprenoid side chain with PHB, generating the first membrane-bound Q intermediate 3-octaprenyl-4-hydroxybenzoate. The protein is 4-hydroxybenzoate octaprenyltransferase of Serratia proteamaculans (strain 568).